The primary structure comprises 141 residues: Meiotically up-regulated gene 118 protein (141 aa).

The segment covering 106–115 (LSSQKSARQP) has biased composition (polar residues). The tract at residues 106-141 (LSSQKSARQPTKTVASSSSSSSKSTTVSKSSSKSQV) is disordered. The span at 116–141 (TKTVASSSSSSSKSTTVSKSSSKSQV) shows a compositional bias: low complexity.

It localises to the nucleus. Functionally, has a role in meiosis. This chain is Meiotically up-regulated gene 118 protein (mug118), found in Schizosaccharomyces pombe (strain 972 / ATCC 24843) (Fission yeast).